A 362-amino-acid chain; its full sequence is Adenosine deaminase (362 aa).

Residues H19 and H21 each contribute to the Zn(2+) site. 3 residues coordinate substrate: H21, D23, and G181. Position 208 (H208) interacts with Zn(2+). E211 acts as the Proton donor in catalysis. Position 300 (D300) interacts with Zn(2+).

Belongs to the metallo-dependent hydrolases superfamily. Adenosine and AMP deaminases family. Adenosine deaminase subfamily. It depends on Zn(2+) as a cofactor.

It carries out the reaction adenosine + H2O + H(+) = inosine + NH4(+). The catalysed reaction is 2'-deoxyadenosine + H2O + H(+) = 2'-deoxyinosine + NH4(+). Functionally, catalyzes the hydrolytic deamination of adenosine and 2-deoxyadenosine. The chain is Adenosine deaminase from Mycobacterium sp. (strain JLS).